Reading from the N-terminus, the 202-residue chain is MKILFDLLPVILFFVAYKIAGGNQAFAHELASRWLGDGIAVTQAPILLATAVAILATIAQIGWVWMRHRKVDTMLWISLAIIAVFGGATLFFHNPTFIKWKPTALYWLFGGTLTVSAVIFRRNLIRKMLEAQIRLPEPVWKRLNLAWAGFFILMGFLNLYVAYNFSEEAWVNFKLFGGMGLMLLFVLGQGFYLSRHIQEETT.

The next 6 membrane-spanning stretches (helical) occupy residues 3–23 (ILFDLLPVILFFVAYKIAGGN), 46–66 (ILLATAVAILATIAQIGWVWM), 73–93 (TMLWISLAIIAVFGGATLFFH), 100–120 (WKPTALYWLFGGTLTVSAVIF), 145–165 (LAWAGFFILMGFLNLYVAYNF), and 173–193 (FKLFGGMGLMLLFVLGQGFYL).

Belongs to the YciB family.

It localises to the cell inner membrane. Functionally, plays a role in cell envelope biogenesis, maintenance of cell envelope integrity and membrane homeostasis. This Aromatoleum aromaticum (strain DSM 19018 / LMG 30748 / EbN1) (Azoarcus sp. (strain EbN1)) protein is Inner membrane-spanning protein YciB.